Reading from the N-terminus, the 237-residue chain is Ribonuclease PH (237 aa).

Phosphate is bound by residues Arg-86 and Gly-124–Arg-126.

This sequence belongs to the RNase PH family. In terms of assembly, homohexameric ring arranged as a trimer of dimers.

It carries out the reaction tRNA(n+1) + phosphate = tRNA(n) + a ribonucleoside 5'-diphosphate. Its function is as follows. Phosphorolytic 3'-5' exoribonuclease that plays an important role in tRNA 3'-end maturation. Removes nucleotide residues following the 3'-CCA terminus of tRNAs; can also add nucleotides to the ends of RNA molecules by using nucleoside diphosphates as substrates, but this may not be physiologically important. Probably plays a role in initiation of 16S rRNA degradation (leading to ribosome degradation) during starvation. The sequence is that of Ribonuclease PH from Methylorubrum extorquens (strain PA1) (Methylobacterium extorquens).